Here is a 1382-residue protein sequence, read N- to C-terminus: DNA-directed RNA polymerase subunit beta' (1382 aa).

Residues C70, C72, C85, and C88 each contribute to the Zn(2+) site. Residues D460, D462, and D464 each contribute to the Mg(2+) site. Positions 808, 882, 889, and 892 each coordinate Zn(2+).

Belongs to the RNA polymerase beta' chain family. As to quaternary structure, the RNAP catalytic core consists of 2 alpha, 1 beta, 1 beta' and 1 omega subunit. When a sigma factor is associated with the core the holoenzyme is formed, which can initiate transcription. Requires Mg(2+) as cofactor. It depends on Zn(2+) as a cofactor.

The catalysed reaction is RNA(n) + a ribonucleoside 5'-triphosphate = RNA(n+1) + diphosphate. In terms of biological role, DNA-dependent RNA polymerase catalyzes the transcription of DNA into RNA using the four ribonucleoside triphosphates as substrates. The polypeptide is DNA-directed RNA polymerase subunit beta' (Citrifermentans bemidjiense (strain ATCC BAA-1014 / DSM 16622 / JCM 12645 / Bem) (Geobacter bemidjiensis)).